An 888-amino-acid polypeptide reads, in one-letter code: Alanine--tRNA ligase (888 aa).

Positions 573, 577, 676, and 680 each coordinate Zn(2+).

The protein belongs to the class-II aminoacyl-tRNA synthetase family. Zn(2+) is required as a cofactor.

The protein localises to the cytoplasm. The enzyme catalyses tRNA(Ala) + L-alanine + ATP = L-alanyl-tRNA(Ala) + AMP + diphosphate. In terms of biological role, catalyzes the attachment of alanine to tRNA(Ala) in a two-step reaction: alanine is first activated by ATP to form Ala-AMP and then transferred to the acceptor end of tRNA(Ala). Also edits incorrectly charged Ser-tRNA(Ala) and Gly-tRNA(Ala) via its editing domain. This chain is Alanine--tRNA ligase, found in Corynebacterium glutamicum (strain ATCC 13032 / DSM 20300 / JCM 1318 / BCRC 11384 / CCUG 27702 / LMG 3730 / NBRC 12168 / NCIMB 10025 / NRRL B-2784 / 534).